The sequence spans 646 residues: Phosphomethylpyrimidine synthase (646 aa).

Substrate-binding positions include Asn-235, Met-264, Tyr-293, His-329, 349–351, 390–393, and Glu-429; these read SRG and DGLR. His-433 is a Zn(2+) binding site. Position 456 (Tyr-456) interacts with substrate. A Zn(2+)-binding site is contributed by His-497. Residues Cys-577, Cys-580, and Cys-585 each contribute to the [4Fe-4S] cluster site. Residues 624–646 form a disordered region; sequence KSEEFRATGSELYHPAVHAEADE.

Belongs to the ThiC family. In terms of assembly, homodimer. It depends on [4Fe-4S] cluster as a cofactor.

The enzyme catalyses 5-amino-1-(5-phospho-beta-D-ribosyl)imidazole + S-adenosyl-L-methionine = 4-amino-2-methyl-5-(phosphooxymethyl)pyrimidine + CO + 5'-deoxyadenosine + formate + L-methionine + 3 H(+). Its pathway is cofactor biosynthesis; thiamine diphosphate biosynthesis. Functionally, catalyzes the synthesis of the hydroxymethylpyrimidine phosphate (HMP-P) moiety of thiamine from aminoimidazole ribotide (AIR) in a radical S-adenosyl-L-methionine (SAM)-dependent reaction. This chain is Phosphomethylpyrimidine synthase, found in Vibrio parahaemolyticus serotype O3:K6 (strain RIMD 2210633).